The chain runs to 255 residues: 5'-nucleotidase SurE (255 aa).

Residues Asp-8, Asp-9, Ser-39, and Asn-91 each coordinate a divalent metal cation.

It belongs to the SurE nucleotidase family. The cofactor is a divalent metal cation.

It is found in the cytoplasm. It carries out the reaction a ribonucleoside 5'-phosphate + H2O = a ribonucleoside + phosphate. Nucleotidase that shows phosphatase activity on nucleoside 5'-monophosphates. This is 5'-nucleotidase SurE from Acinetobacter baumannii (strain SDF).